Here is a 180-residue protein sequence, read N- to C-terminus: Negative modulator of initiation of replication (180 aa).

3 interaction with DNA regions span residues 86-87 (AV), 115-119 (RTRVY), and 149-155 (NTNTGRK).

It belongs to the SeqA family. Homodimer. Polymerizes to form helical filaments.

It localises to the cytoplasm. Functionally, negative regulator of replication initiation, which contributes to regulation of DNA replication and ensures that replication initiation occurs exactly once per chromosome per cell cycle. Binds to pairs of hemimethylated GATC sequences in the oriC region, thus preventing assembly of replication proteins and re-initiation at newly replicated origins. Repression is relieved when the region becomes fully methylated. The chain is Negative modulator of initiation of replication from Enterobacter sp. (strain 638).